A 274-amino-acid chain; its full sequence is Copper chaperone for superoxide dismutase (274 aa).

The 64-residue stretch at 11–74 (MCALEFTVQM…LLESTGRQAV (64 aa)) folds into the HMA domain. Cu cation contacts are provided by C22 and C25. K76 is covalently cross-linked (Glycyl lysine isopeptide (Lys-Gly) (interchain with G-Cter in ubiquitin)). The superoxide dismutase-like stretch occupies residues 88–234 (AAVAIMEGSG…LACGIIARSA (147 aa)). C141 and C227 are oxidised to a cystine. The Zn(2+) site is built by H147, H155, H164, and D167. Glycyl lysine isopeptide (Lys-Gly) (interchain with G-Cter in ubiquitin) cross-links involve residues K189, K216, and K241. Positions 244 and 246 each coordinate Cu cation. S267 is subject to Phosphoserine.

In the C-terminal section; belongs to the Cu-Zn superoxide dismutase family. In terms of assembly, homodimer, and heterodimer with SOD1. Interacts with COMMD1. Interacts with XIAP/BIRC4. Interacts with SLC31A1(via C-terminal domain); this interaction is Cu(1+)-mediated. The heterodimer CCS:SOD1 interacts with SLC31A1; this heterotrimer is Cu(1+)-mediated and its maintenance is regulated through SOD1 activation. Cu(2+) is required as a cofactor. The cofactor is Zn(2+). Post-translationally, ubiquitinion by XIAP/BIRC4 leads to enhancement of its chaperone activity toward its physiologic target, SOD1, rather than proteasomal degradation. XIAP/BIRC4 preferentially ubiquitinates at Lys-241.

The protein resides in the cytoplasm. Functionally, delivers copper to copper zinc superoxide dismutase (SOD1). The sequence is that of Copper chaperone for superoxide dismutase from Rattus norvegicus (Rat).